We begin with the raw amino-acid sequence, 357 residues long: MRVYPTFFRLAFSWMDAERAHRIGFRAIRLAHSSGAGRVLAKFTAPAPSLQTTAFGITFPSPFGLAAGFDKEGHGIEALTELGFGHVEVGTITGQAQPGNEKPRLFRLVEDKAVINRMGFNNDGATAVAPRLKSARAALQRRHPGVRPVIGVNIGKSKVVELEDAASDYLVSARSLAPAADYLVVNVSSPNTPGLRLLQNVETLRPLLKAVGEEADKAAGRHVPLLVKIAPDLTDEDIDDVAKLALDLGLDGIIATNTTIGREGLTSDPEKIRDCGPGGLSGAPLKARSLEVLRRLKEATGGSLTLVSVGGVENARDVQERLDAGATLVQGYTAFLYEGPFWAARINRQLAKHPARR.

FMN is bound by residues 67 to 71 (AGFDK) and Thr91. Position 71 (Lys71) interacts with substrate. Residue 116–120 (NRMGF) coordinates substrate. FMN is bound by residues Asn153 and Asn186. Asn186 contributes to the substrate binding site. Residue Ser189 is the Nucleophile of the active site. Position 191 (Asn191) interacts with substrate. Positions 228 and 256 each coordinate FMN. 257 to 258 (NT) contributes to the substrate binding site. Residues Gly282, Gly311, and 332–333 (YT) contribute to the FMN site.

This sequence belongs to the dihydroorotate dehydrogenase family. Type 2 subfamily. In terms of assembly, monomer. It depends on FMN as a cofactor.

It localises to the cell membrane. The catalysed reaction is (S)-dihydroorotate + a quinone = orotate + a quinol. The protein operates within pyrimidine metabolism; UMP biosynthesis via de novo pathway; orotate from (S)-dihydroorotate (quinone route): step 1/1. Its function is as follows. Catalyzes the conversion of dihydroorotate to orotate with quinone as electron acceptor. The sequence is that of Dihydroorotate dehydrogenase (quinone) from Arthrobacter sp. (strain FB24).